The primary structure comprises 179 residues: ATP synthase subunit delta (179 aa).

It belongs to the ATPase delta chain family. F-type ATPases have 2 components, F(1) - the catalytic core - and F(0) - the membrane proton channel. F(1) has five subunits: alpha(3), beta(3), gamma(1), delta(1), epsilon(1). F(0) has three main subunits: a(1), b(2) and c(10-14). The alpha and beta chains form an alternating ring which encloses part of the gamma chain. F(1) is attached to F(0) by a central stalk formed by the gamma and epsilon chains, while a peripheral stalk is formed by the delta and b chains.

The protein localises to the cell membrane. F(1)F(0) ATP synthase produces ATP from ADP in the presence of a proton or sodium gradient. F-type ATPases consist of two structural domains, F(1) containing the extramembraneous catalytic core and F(0) containing the membrane proton channel, linked together by a central stalk and a peripheral stalk. During catalysis, ATP synthesis in the catalytic domain of F(1) is coupled via a rotary mechanism of the central stalk subunits to proton translocation. Its function is as follows. This protein is part of the stalk that links CF(0) to CF(1). It either transmits conformational changes from CF(0) to CF(1) or is implicated in proton conduction. The protein is ATP synthase subunit delta of Mycoplasmopsis pulmonis (strain UAB CTIP) (Mycoplasma pulmonis).